Reading from the N-terminus, the 103-residue chain is MPGRKARRNAPVNPTRAELPPEFAAQLRKIGDKVYCTWSAPDITVVLAQMPGKSQKSRMRSPSPTRVPADLKDECAQLRRIGDKVNLRQKLLNLISKLFNLVT.

Short sequence motifs (BH3) lie at residues 27-35 (LRKIGDKVY) and 78-86 (LRRIGDKVN). The interval 90–99 (KLLNLISKLF) is required for mitochondrial location.

This sequence belongs to the PMAIP1 family. In terms of assembly, interacts with MCL1. Interacts with BCL2A1. Interacts with BAX. Interacts with BCL2L10. Detected in thymocytes after irradiation with X-rays. Not detectable in untreated thymocytes (at protein level). Detected in embryonic neural precursor cells of the telencephalon Constitutively expressed at low levels in adult brain, testis, thymus, spleen, lung and kidney.

The protein localises to the mitochondrion. In terms of biological role, promotes activation of caspases and apoptosis. Promotes mitochondrial membrane changes and efflux of apoptogenic proteins from the mitochondria. Contributes to p53/TP53-dependent apoptosis after radiation exposure. Promotes proteasomal degradation of MCL1. Competes with BIM/BCL2L11 for binding to MCL1 and can displace BIM/BCL2L11 from its binding site on MCL1. Competes with BAK1 for binding to MCL1 and can displace BAK1 from its binding site on MCL1. The sequence is that of Phorbol-12-myristate-13-acetate-induced protein 1 (Pmaip1) from Mus musculus (Mouse).